The sequence spans 282 residues: uncharacterized protein (282 aa).

5 consecutive transmembrane segments (helical) span residues 9 to 29 (LLKIFVVGVFPCTLFVNAPHG), 43 to 63 (ISGRVGWVLMELVAPLTFLYA), 123 to 143 (VFVSAVLFNFLNGMSIGLYLV), 158 to 178 (YIGMFLWLMGWLGNMYHDNIL), and 232 to 252 (LAAGPSAEPFWWFFLSEILLM).

It belongs to the steroid 5-alpha reductase family.

Its subcellular location is the endoplasmic reticulum membrane. This is an uncharacterized protein from Schizosaccharomyces pombe (strain 972 / ATCC 24843) (Fission yeast).